We begin with the raw amino-acid sequence, 106 residues long: MSKLYEWIIPESDVLDKEEVQVKPPAMYKVVLNNDDYTPMDFVIEVLQKFFSMDMEKATQLMLNVHYEGKAICGTFTAEVAETKVAQVMMHARENEHPLLCTMEKA.

This sequence belongs to the ClpS family. In terms of assembly, binds to the N-terminal domain of the chaperone ClpA.

Functionally, involved in the modulation of the specificity of the ClpAP-mediated ATP-dependent protein degradation. The polypeptide is ATP-dependent Clp protease adapter protein ClpS (Photobacterium profundum (strain SS9)).